Here is a 103-residue protein sequence, read N- to C-terminus: Large ribosomal subunit protein bL21 (103 aa).

Belongs to the bacterial ribosomal protein bL21 family. In terms of assembly, part of the 50S ribosomal subunit. Contacts protein L20.

Functionally, this protein binds to 23S rRNA in the presence of protein L20. This chain is Large ribosomal subunit protein bL21, found in Bordetella petrii (strain ATCC BAA-461 / DSM 12804 / CCUG 43448).